A 659-amino-acid polypeptide reads, in one-letter code: Cyclic-di-AMP phosphodiesterase GdpP (659 aa).

Residues 1 to 8 (MPSFYEKP) are Cytoplasmic-facing. The next 2 membrane-spanning stretches (helical) occupy residues 9–29 (LFRYPIYALIALSIITILISF) and 30–50 (YFNWILGTVEVLLLAVILFFI). Residues 51–659 (KRADSLIRQE…DEYFEGGVQR (609 aa)) are Cytoplasmic-facing. Positions 84 to 149 (PIGIMLFNDQ…NDRKFRVVIK (66 aa)) are PAS-like domain, required for heme-binding. The 129-residue stretch at 173–301 (ERTVLAYIFL…GGDQVAIKLP (129 aa)) folds into the GGDEF domain. A DHH domain region spans residues 339-496 (NVIIMGHKFP…IEATALLAGI (158 aa)). Mn(2+) contacts are provided by His-345, Asp-349, Asp-351, Asp-420, His-444, and Asp-499. The tract at residues 591-646 (FAVARRDEQTVCISARSLGEVNVQIIMEALEGGGHLTNAATQLSGISVSEALERLK) is DHHA1 domain.

Belongs to the GdpP/PdeA phosphodiesterase family. It depends on heme b as a cofactor. Mg(2+) serves as cofactor. The cofactor is Mn(2+).

The protein resides in the cell membrane. It carries out the reaction 3',3'-c-di-AMP + H2O = 5'-O-phosphonoadenylyl-(3'-&gt;5')-adenosine + H(+). Its activity is regulated as follows. Phosphodiesterase (PDE) inhibited by Zn(2+), Ca(2+) inhibits in the presence of Mg(2+) but not Mn(2+); c-di-AMP PDE activity is competitively inhibited by ppGpp. Heme binding (by Fe(2+) or Fe(3+) heme) inhibits PDE, activity is partially restored by KCN or NO only for Fe(2+) heme. Binding of NO to Fe(2+) heme switches from hexa- to pentacoordination. Heme binding inhibits the ATPase activity. Its function is as follows. Has phosphodiesterase (PDE) activity against cyclic-di-AMP (c-di-AMP) and to a much lesser extent against cyclic-di-GMP (c-di-GMP) in the DHH/DHHA1 domains. Also has ATPase activity, probably via the GGDEF domain. Overexpression leads to increased sensitivity to methyl methanesulfonate (MMS) and H(2)O(2). Overexpression leads to extreme sensitivity to the beta-lactam antibiotic cefuroxime (CEF), probably dependent on PDE activity. May monitor cellular heme or NO levels. In B.subtilis c-di-AMP is a second messenger that mediates growth, DNA repair and cell wall homeostasis; it is toxic when present in excess. The chain is Cyclic-di-AMP phosphodiesterase GdpP from Bacillus subtilis (strain 168).